Reading from the N-terminus, the 2210-residue chain is Orsellinic acid synthase ArmB (2210 aa).

Residues 38–261 (LLLDACHYAF…HKTTVDALYH (224 aa)) form an N-terminal acylcarrier protein transacylase domain (SAT) region. The region spanning 391–817 (QEPIAICGMS…GSNGALLLEE (427 aa)) is the Ketosynthase family 3 (KS3) domain. Catalysis depends on for beta-ketoacyl synthase activity residues cysteine 561, histidine 696, and histidine 736. A malonyl-CoA:ACP transacylase (MAT) domain region spans residues 915-1240 (VFVFSGQGGQ…GLTLSSSLSQ (326 aa)). Serine 1009 acts as the For acyl/malonyl transferase activity in catalysis. The interval 1307 to 1437 (MLQSWAQFPS…GQFRPLLVVD (131 aa)) is N-terminal hotdog fold. Residues 1307–1614 (MLQSWAQFPS…FKKLRLNTLQ (308 aa)) enclose the PKS/mFAS DH domain. The product template (PT) domain stretch occupies residues 1336–1611 (ITGHIVGDVP…GMCFKKLRLN (276 aa)). The active-site Proton acceptor; for dehydratase activity is the histidine 1339. A C-terminal hotdog fold region spans residues 1464–1614 (AEVFTTRTAY…FKKLRLNTLQ (151 aa)). Aspartate 1525 functions as the Proton donor; for dehydratase activity in the catalytic mechanism. The Carrier 1 domain occupies 1660–1735 (VDVQNTVLNI…ELVREISSTV (76 aa)). Serine 1694 is subject to O-(pantetheine 4'-phosphoryl)serine. The interval 1739 to 1761 (AATAVNTPETASTPEPTLQGDAS) is disordered. The region spanning 1845-1922 (SSPSSDLVDT…AVNQYISSKR (78 aa)) is the Carrier 2 domain. Position 1882 is an O-(pantetheine 4'-phosphoryl)serine (serine 1882). The interval 1920–1946 (SKRPGKSPKQVEETAMDPDREEDLSDL) is disordered. A compositionally biased stretch (acidic residues) spans 1933–1944 (TAMDPDREEDLS). The segment at 1963–2202 (VPMSVQKSSS…LGAVTQALVD (240 aa)) is thioesterase (TE) domain.

It participates in secondary metabolite biosynthesis. In terms of biological role, non-reducing polyketide synthase, part of the gene cluster that mediates the biosynthesis of melleolides, a range of antifungal and phytotoxic polyketide derivatives composed of an orsellinic acid (OA) moiety esterified to various sesquiterpene alcohols. The first step in melleolides biosynthesis is performed by the delta(6)-protoilludene synthase PRO1 which catalyzes the cyclization of farnesyl diphosphate to protoilludene. The orsellinic acid synthase armB produces OA by condensing acetyl-CoA with 3 malonyl-CoA units in a three-round chain elongation reaction folowed by a C2-C7 ring closure. ArmB further catalyzes the trans-esterification of OA to the various sesquiterpene alcohols resulting from the hydroxylation of protoilludene. The melleolides cluster also includes 5 cytochrome P450 monooxygenases, 4 NAD(+)-dependent oxidoreductases, one flavin-dependent oxidoreductase, and one O-methyltransferase. The cytochrome P450 monooxygenases may be involved in protoilludene hydroxylation to elaborate melleolides with multiple alcohol groups, such as melleolide D, which carries alcohol functionalities at C-4, C-5, C-10, and C-13. The role of the NAD(+)-dependent enzymes remains unknown. Numerous melleolides, including arnamial, show 5'-O-methylation of the aromatic moiety which may be catalyzed by the methyltransferase encoded in the cluster. The flavin-dependent oxidoreductase might represent the dehydrogenase yielding the aldehyde in position 1 of arnamial and other melleolides. Finally, several halogenase localized outside of the cluster (armH1 to armH5), are able to catalyze the transfer of a single chlorine atom to the melleolide backbone, resulting in a 6'-chloromelleolide product. This is Orsellinic acid synthase ArmB from Armillaria ostoyae (Armillaria root rot fungus).